We begin with the raw amino-acid sequence, 546 residues long: NAD(P)H-quinone oxidoreductase chain 4 (546 aa).

14 consecutive transmembrane segments (helical) span residues 24–44, 56–76, 106–126, 132–152, 156–176, 188–208, 232–252, 263–283, 297–317, 326–346, 352–372, 396–416, 437–457, and 484–504; these read FPWL…IPFF, FALS…INGF, ISMP…LAAW, PKLF…VFAV, LLFF…LAIW, FIIY…AMGF, ILCY…VPLH, TAPV…YALL, FAPL…LTSF, IAYS…SFSS, AMLQ…LVGA, FALW…SGFV, VVMA…LLSM, and VYII…PRLV.

It belongs to the complex I subunit 4 family.

It is found in the cellular thylakoid membrane. It carries out the reaction a plastoquinone + NADH + (n+1) H(+)(in) = a plastoquinol + NAD(+) + n H(+)(out). The catalysed reaction is a plastoquinone + NADPH + (n+1) H(+)(in) = a plastoquinol + NADP(+) + n H(+)(out). Functionally, NDH-1 shuttles electrons from NAD(P)H, via FMN and iron-sulfur (Fe-S) centers, to quinones in the respiratory chain. The immediate electron acceptor for the enzyme in this species is believed to be plastoquinone. Couples the redox reaction to proton translocation (for every two electrons transferred, four hydrogen ions are translocated across the cytoplasmic membrane), and thus conserves the redox energy in a proton gradient. The protein is NAD(P)H-quinone oxidoreductase chain 4 of Prochlorococcus marinus (strain MIT 9515).